A 737-amino-acid polypeptide reads, in one-letter code: 1,4-alpha-glucan branching enzyme GlgB (737 aa).

The Nucleophile role is filled by aspartate 419. Glutamate 472 (proton donor) is an active-site residue.

This sequence belongs to the glycosyl hydrolase 13 family. GlgB subfamily. As to quaternary structure, monomer.

It catalyses the reaction Transfers a segment of a (1-&gt;4)-alpha-D-glucan chain to a primary hydroxy group in a similar glucan chain.. It participates in glycan biosynthesis; glycogen biosynthesis. Functionally, catalyzes the formation of the alpha-1,6-glucosidic linkages in glycogen by scission of a 1,4-alpha-linked oligosaccharide from growing alpha-1,4-glucan chains and the subsequent attachment of the oligosaccharide to the alpha-1,6 position. This Cellvibrio japonicus (strain Ueda107) (Pseudomonas fluorescens subsp. cellulosa) protein is 1,4-alpha-glucan branching enzyme GlgB.